The following is a 315-amino-acid chain: Methionyl-tRNA formyltransferase (315 aa).

113 to 116 (SLLP) serves as a coordination point for (6S)-5,6,7,8-tetrahydrofolate.

It belongs to the Fmt family.

The enzyme catalyses L-methionyl-tRNA(fMet) + (6R)-10-formyltetrahydrofolate = N-formyl-L-methionyl-tRNA(fMet) + (6S)-5,6,7,8-tetrahydrofolate + H(+). Its function is as follows. Attaches a formyl group to the free amino group of methionyl-tRNA(fMet). The formyl group appears to play a dual role in the initiator identity of N-formylmethionyl-tRNA by promoting its recognition by IF2 and preventing the misappropriation of this tRNA by the elongation apparatus. The sequence is that of Methionyl-tRNA formyltransferase from Salmonella dublin (strain CT_02021853).